The following is a 396-amino-acid chain: Adenosine 3'-phospho 5'-phosphosulfate transporter 2 (396 aa).

Positions 22-42 (NGGESAGNSPPSQRKSSTSES) are disordered. Positions 27–42 (AGNSPPSQRKSSTSES) are enriched in polar residues. Phosphoserine is present on residues Ser-37 and Ser-40. N-linked (GlcNAc...) asparagine glycosylation is present at Asn-57. The next 10 helical transmembrane spans lie at 66-86 (CAGVFFLYILYGYLQELIFTV), 91-111 (PYGWFLTLVQFGYYIGFGLVE), 140-160 (LILAALTLGTMGLSNSSLGYL), 163-183 (PTQVIFKCCKLIPVLVGSILI), 189-209 (GLLDFAAATCMCIGLAWFTLA), 216-236 (NFNLLGVAMISGALLCDAAIG), 253-273 (VVFYSYGLGFVYLFVIMLVTG), 290-310 (FGYGFLFSLSGYLGIQFVLAL), 318-338 (IAATVTTARKAVTIAFSFVLF), and 342-362 (FTLQYLWSGLIVVLGIYLNVY).

This sequence belongs to the nucleotide-sugar transporter family. SLC35B subfamily.

The protein resides in the golgi apparatus membrane. Functionally, mediates the transport of adenosine 3'-phospho 5'-phosphosulfate (PAPS), from cytosol into Golgi. PAPS is a universal sulfuryl donor for sulfation events that take place in the Golgi. Essential for viability. Involved in glycosaminoglycan synthesis and the subsequent signaling. May be involved in hh and dpp signaling by controlling the sulfation of heparan sulfate (HS). This chain is Adenosine 3'-phospho 5'-phosphosulfate transporter 2 (Papst2), found in Drosophila melanogaster (Fruit fly).